The sequence spans 179 residues: Outer-membrane lipoprotein carrier protein (179 aa).

The N-terminal stretch at 1–22 (MEVLRRYVLVFTSLCMTLFAWG) is a signal peptide.

It belongs to the LolA family. In terms of assembly, monomer.

Its subcellular location is the periplasm. Its function is as follows. Participates in the translocation of lipoproteins from the inner membrane to the outer membrane. Only forms a complex with a lipoprotein if the residue after the N-terminal Cys is not an aspartate (The Asp acts as a targeting signal to indicate that the lipoprotein should stay in the inner membrane). The protein is Outer-membrane lipoprotein carrier protein of Helicobacter hepaticus (strain ATCC 51449 / 3B1).